A 538-amino-acid polypeptide reads, in one-letter code: Cytochrome P450 monooxygenase xanG (538 aa).

Residues 44-64 (MILYYLASIPLAIICYLAWYL) form a helical membrane-spanning segment. A glycan (N-linked (GlcNAc...) asparagine) is linked at asparagine 378. Cysteine 489 contacts heme.

The protein belongs to the cytochrome P450 family. Requires heme as cofactor.

The protein localises to the membrane. It participates in secondary metabolite biosynthesis. Its function is as follows. Cytochrome P450 monooxygenase; part of the gene cluster that mediates the biosynthesis of the isocyanide xanthocillin and its derivatives. The first step of the pathway consists in the conversion of tyrosine into a vinyl-isonitrile intermediate by the isocyanide synthase xanB. Subsequent oxidative dimerization of this intermediate to form xanthocillin may involve the cytochrome P450 monooxygenase xanG, whose expression is coregulated with that of XanB. Xanthocillin can be further modified by the isonitrile hydratase-like protein xanA which introduces N-formyl groups and the methyltransferase xanE which introduces methyl groups, leading to the production of several derivatives including fumiformamide. Finally, fumiformamide can be subject to both oxidative and reductive cyclization to yield melanocins E and F, respectively. The protein is Cytochrome P450 monooxygenase xanG of Aspergillus fumigatus (strain ATCC MYA-4609 / CBS 101355 / FGSC A1100 / Af293) (Neosartorya fumigata).